A 373-amino-acid chain; its full sequence is Putative glutamate--cysteine ligase 2-2 (373 aa).

This sequence belongs to the glutamate--cysteine ligase type 2 family. YbdK subfamily.

It carries out the reaction L-cysteine + L-glutamate + ATP = gamma-L-glutamyl-L-cysteine + ADP + phosphate + H(+). Functionally, ATP-dependent carboxylate-amine ligase which exhibits weak glutamate--cysteine ligase activity. This is Putative glutamate--cysteine ligase 2-2 from Legionella pneumophila (strain Corby).